Reading from the N-terminus, the 159-residue chain is Odorant-binding protein (159 aa).

It belongs to the calycin superfamily. Lipocalin family. As to quaternary structure, homodimer.

Its subcellular location is the secreted. Functionally, this protein binds a wide variety of chemical odorants. The protein is Odorant-binding protein of Bos taurus (Bovine).